The chain runs to 824 residues: RelA-associated inhibitor (824 aa).

The residue at position 1 (Met-1) is an N-acetylmethionine. Disordered regions lie at residues 48–87 and 99–271; these read SLWSDSPAPPGAQAGVPSRMARYSTSPVPEHFGSRGSPQK and RSES…YERL. 7 positions are modified to phosphoserine: Ser-84, Ser-100, Ser-102, Ser-110, Ser-113, Ser-119, and Ser-120. Thr-123 bears the Phosphothreonine mark. Phosphoserine is present on Ser-134. Residues Arg-137, Arg-142, Arg-144, Arg-160, Arg-167, and Arg-180 each carry the omega-N-methylarginine modification. Ser-183, Ser-187, and Ser-203 each carry phosphoserine. Arg-205 carries the post-translational modification Omega-N-methylarginine. Residue Thr-275 is modified to Phosphothreonine. Ser-279 carries the post-translational modification Phosphoserine. Disordered stretches follow at residues 291 to 370 and 388 to 501; these read SLDG…RPIP and RAVL…QTVP. Thr-307 carries the phosphothreonine modification. Phosphoserine occurs at positions 315, 331, and 338. Position 340 is a phosphothreonine (Thr-340). The span at 359 to 370 shows a compositional bias: low complexity; it reads QPRSTPRQRPIP. The segment covering 400–424 has biased composition (pro residues); sequence APPPKLPPQPPPQPQMQPQPQPQPQ. The segment covering 425–440 has biased composition (low complexity); it reads MQPQSQAQPQTPAPQQ. Phosphoserine is present on residues Ser-522, Ser-563, and Ser-593. The disordered stretch occupies residues 547–614; it reads FHRHGGPGPG…SVLRKVGSPR (68 aa). Positions 575-597 are enriched in pro residues; it reads PPAPAPPAPIPPPAPPQSSPPEQ. 2 ANK repeats span residues 655–684 and 688–717; these read EGITALHNAICGANYPIVDFLIAAGANVNS and HGWTPLHCAASCNDTAICTALVQHGAAIFA. The region spanning 754 to 816 is the SH3 domain; that stretch reads MHNGVVYALW…PRNYFGLFPR (63 aa).

This sequence belongs to the iASPP family. As to quaternary structure, interacts with TP63 and TP73. Interacts with RELA NF-kappa-B subunit and with SP1 via its C-terminal part. Interacts (via SH3 domain and ANK repeats) with p53/TP53; the interaction inhibits pro-apoptotic activity of p53/TP53. Most abundant in skin with high levels also found in heart, testis and stomach. In 15.5 dpc embryonic heart, expressed at higher levels in atria than ventricles.

The protein resides in the cytoplasm. Its subcellular location is the nucleus. In terms of biological role, regulator that plays a central role in regulation of apoptosis and transcription via its interaction with NF-kappa-B and p53/TP53 proteins. Inhibits p53/TP53 function, possibly by preventing the association between p53/TP53 and ASPP1 or ASPP2, and therefore suppressing the subsequent activation of apoptosis. Is involved in NF-kappa-B dependent negative regulation of inflammatory response. The sequence is that of RelA-associated inhibitor from Mus musculus (Mouse).